A 675-amino-acid chain; its full sequence is Methionine--tRNA ligase (675 aa).

Positions 15 to 25 (PYANGSIHLGH) match the 'HIGH' region motif. Zn(2+) is bound by residues C146, C149, C159, and C162. The 'KMSKS' region signature appears at 332 to 336 (KMSKS). An ATP-binding site is contributed by K335. In terms of domain architecture, tRNA-binding spans 573-675 (DFAKVDMRIA…SGAQPGMQVK (103 aa)).

This sequence belongs to the class-I aminoacyl-tRNA synthetase family. MetG type 1 subfamily. As to quaternary structure, homodimer. Zn(2+) serves as cofactor.

The protein resides in the cytoplasm. The enzyme catalyses tRNA(Met) + L-methionine + ATP = L-methionyl-tRNA(Met) + AMP + diphosphate. Is required not only for elongation of protein synthesis but also for the initiation of all mRNA translation through initiator tRNA(fMet) aminoacylation. The chain is Methionine--tRNA ligase from Serratia proteamaculans (strain 568).